Consider the following 155-residue polypeptide: Putative ATP synthase protein YMF19-like protein (155 aa).

Helical transmembrane passes span Phe-23 to Phe-43, Trp-89 to Phe-109, and Val-117 to Phe-137.

This sequence belongs to the ATPase protein YMF19 family.

The protein localises to the mitochondrion membrane. In Marchantia polymorpha (Common liverwort), this protein is Putative ATP synthase protein YMF19-like protein (YMF18).